Reading from the N-terminus, the 228-residue chain is Leucyl/phenylalanyl-tRNA--protein transferase (228 aa).

Belongs to the L/F-transferase family.

It is found in the cytoplasm. The catalysed reaction is N-terminal L-lysyl-[protein] + L-leucyl-tRNA(Leu) = N-terminal L-leucyl-L-lysyl-[protein] + tRNA(Leu) + H(+). It catalyses the reaction N-terminal L-arginyl-[protein] + L-leucyl-tRNA(Leu) = N-terminal L-leucyl-L-arginyl-[protein] + tRNA(Leu) + H(+). The enzyme catalyses L-phenylalanyl-tRNA(Phe) + an N-terminal L-alpha-aminoacyl-[protein] = an N-terminal L-phenylalanyl-L-alpha-aminoacyl-[protein] + tRNA(Phe). Functions in the N-end rule pathway of protein degradation where it conjugates Leu, Phe and, less efficiently, Met from aminoacyl-tRNAs to the N-termini of proteins containing an N-terminal arginine or lysine. The chain is Leucyl/phenylalanyl-tRNA--protein transferase from Lawsonia intracellularis (strain PHE/MN1-00).